We begin with the raw amino-acid sequence, 455 residues long: Argininosuccinate lyase (455 aa).

It belongs to the lyase 1 family. Argininosuccinate lyase subfamily.

The protein resides in the cytoplasm. The enzyme catalyses 2-(N(omega)-L-arginino)succinate = fumarate + L-arginine. It participates in amino-acid biosynthesis; L-arginine biosynthesis; L-arginine from L-ornithine and carbamoyl phosphate: step 3/3. The chain is Argininosuccinate lyase from Shewanella denitrificans (strain OS217 / ATCC BAA-1090 / DSM 15013).